The primary structure comprises 72 residues: Prokaryotic ubiquitin-like protein Pup (72 aa).

Residues 1 to 10 (MATRDSGGGQ) are compositionally biased toward gly residues. The interval 1–41 (MATRDSGGGQQRADRRAEEIDDVATEDTSASDLKERHEKLS) is disordered. Residues 27 to 61 (DTSASDLKERHEKLSEDVDSLLDEIDDVLEENAEE) are a coiled coil. The segment at 28 to 66 (TSASDLKERHEKLSEDVDSLLDEIDDVLEENAEEFVKGY) is ARC ATPase binding. A compositionally biased stretch (basic and acidic residues) spans 32–41 (DLKERHEKLS). Position 72 is a deamidated glutamine (Gln-72). Residue Gln-72 forms an Isoglutamyl lysine isopeptide (Gln-Lys) (interchain with K-? in acceptor proteins) linkage.

This sequence belongs to the prokaryotic ubiquitin-like protein family. In terms of assembly, strongly interacts with the proteasome-associated ATPase ARC through a hydrophobic interface; the interacting region of Pup lies in its C-terminal half. There is one Pup binding site per ARC hexamer ring. Is modified by deamidation of its C-terminal glutamine to glutamate by the deamidase Dop, a prerequisite to the subsequent pupylation process.

It participates in protein degradation; proteasomal Pup-dependent pathway. Functionally, protein modifier that is covalently attached to lysine residues of substrate proteins, thereby targeting them for proteasomal degradation. The tagging system is termed pupylation. The sequence is that of Prokaryotic ubiquitin-like protein Pup from Frankia casuarinae (strain DSM 45818 / CECT 9043 / HFP020203 / CcI3).